Reading from the N-terminus, the 384-residue chain is Histidinol-phosphate aminotransferase (384 aa).

Lys-223 bears the N6-(pyridoxal phosphate)lysine mark.

Belongs to the class-II pyridoxal-phosphate-dependent aminotransferase family. It depends on pyridoxal 5'-phosphate as a cofactor.

It carries out the reaction L-histidinol phosphate + 2-oxoglutarate = 3-(imidazol-4-yl)-2-oxopropyl phosphate + L-glutamate. Its pathway is amino-acid biosynthesis; L-histidine biosynthesis; L-histidine from 5-phospho-alpha-D-ribose 1-diphosphate: step 7/9. This Schizosaccharomyces pombe (strain 972 / ATCC 24843) (Fission yeast) protein is Histidinol-phosphate aminotransferase (his3).